The sequence spans 729 residues: Fatty acid oxidation complex subunit alpha (729 aa).

An enoyl-CoA hydratase/isomerase region spans residues 1 to 189; sequence MLYQGESLYL…KVGLVQAVVA (189 aa). Position 296 (D296) interacts with substrate. The tract at residues 311–729 is 3-hydroxyacyl-CoA dehydrogenase; that stretch reads PVPQQAAVLG…HADVSHGQPA (419 aa). Residues M324, D343, 400–402, K407, and S429 contribute to the NAD(+) site; that span reads VVE. H450 (for 3-hydroxyacyl-CoA dehydrogenase activity) is an active-site residue. NAD(+) is bound at residue N453. Residues N500 and Y660 each coordinate substrate.

In the N-terminal section; belongs to the enoyl-CoA hydratase/isomerase family. It in the C-terminal section; belongs to the 3-hydroxyacyl-CoA dehydrogenase family. In terms of assembly, heterotetramer of two alpha chains (FadB) and two beta chains (FadA).

The enzyme catalyses a (3S)-3-hydroxyacyl-CoA + NAD(+) = a 3-oxoacyl-CoA + NADH + H(+). It carries out the reaction a (3S)-3-hydroxyacyl-CoA = a (2E)-enoyl-CoA + H2O. It catalyses the reaction a 4-saturated-(3S)-3-hydroxyacyl-CoA = a (3E)-enoyl-CoA + H2O. The catalysed reaction is (3S)-3-hydroxybutanoyl-CoA = (3R)-3-hydroxybutanoyl-CoA. The enzyme catalyses a (3Z)-enoyl-CoA = a 4-saturated (2E)-enoyl-CoA. It carries out the reaction a (3E)-enoyl-CoA = a 4-saturated (2E)-enoyl-CoA. Its pathway is lipid metabolism; fatty acid beta-oxidation. Functionally, involved in the aerobic and anaerobic degradation of long-chain fatty acids via beta-oxidation cycle. Catalyzes the formation of 3-oxoacyl-CoA from enoyl-CoA via L-3-hydroxyacyl-CoA. It can also use D-3-hydroxyacyl-CoA and cis-3-enoyl-CoA as substrate. The protein is Fatty acid oxidation complex subunit alpha of Pectobacterium atrosepticum (strain SCRI 1043 / ATCC BAA-672) (Erwinia carotovora subsp. atroseptica).